Here is a 188-residue protein sequence, read N- to C-terminus: Elongation factor P (188 aa).

At lysine 34 the chain carries N6-(3,6-diaminohexanoyl)-5-hydroxylysine.

The protein belongs to the elongation factor P family. In terms of processing, may be beta-lysylated on the epsilon-amino group of Lys-34 by the combined action of EpmA and EpmB, and then hydroxylated on the C5 position of the same residue by EpmC (if this protein is present). Lysylation is critical for the stimulatory effect of EF-P on peptide-bond formation. The lysylation moiety may extend toward the peptidyltransferase center and stabilize the terminal 3-CCA end of the tRNA. Hydroxylation of the C5 position on Lys-34 may allow additional potential stabilizing hydrogen-bond interactions with the P-tRNA.

The protein resides in the cytoplasm. The protein operates within protein biosynthesis; polypeptide chain elongation. Involved in peptide bond synthesis. Alleviates ribosome stalling that occurs when 3 or more consecutive Pro residues or the sequence PPG is present in a protein, possibly by augmenting the peptidyl transferase activity of the ribosome. Modification of Lys-34 is required for alleviation. The sequence is that of Elongation factor P from Haemophilus influenzae (strain 86-028NP).